We begin with the raw amino-acid sequence, 352 residues long: Anthranilate phosphoribosyltransferase (352 aa).

Residues glycine 91, 94-95 (GD), threonine 99, 101-104 (NIST), 119-127 (KHGNRASSS), and serine 131 contribute to the 5-phospho-alpha-D-ribose 1-diphosphate site. Glycine 91 contributes to the anthranilate binding site. Residue serine 103 participates in Mg(2+) binding. Anthranilate is bound at residue asparagine 122. Residue arginine 177 participates in anthranilate binding. Positions 235 and 236 each coordinate Mg(2+).

Belongs to the anthranilate phosphoribosyltransferase family. As to quaternary structure, homodimer. The cofactor is Mg(2+).

The catalysed reaction is N-(5-phospho-beta-D-ribosyl)anthranilate + diphosphate = 5-phospho-alpha-D-ribose 1-diphosphate + anthranilate. It functions in the pathway amino-acid biosynthesis; L-tryptophan biosynthesis; L-tryptophan from chorismate: step 2/5. Its function is as follows. Catalyzes the transfer of the phosphoribosyl group of 5-phosphorylribose-1-pyrophosphate (PRPP) to anthranilate to yield N-(5'-phosphoribosyl)-anthranilate (PRA). The sequence is that of Anthranilate phosphoribosyltransferase from Arthrobacter sp. (strain FB24).